Consider the following 97-residue polypeptide: Co-chaperonin GroES (97 aa).

The protein belongs to the GroES chaperonin family. As to quaternary structure, heptamer of 7 subunits arranged in a ring. Interacts with the chaperonin GroEL.

The protein resides in the cytoplasm. In terms of biological role, together with the chaperonin GroEL, plays an essential role in assisting protein folding. The GroEL-GroES system forms a nano-cage that allows encapsulation of the non-native substrate proteins and provides a physical environment optimized to promote and accelerate protein folding. GroES binds to the apical surface of the GroEL ring, thereby capping the opening of the GroEL channel. This Proteus mirabilis (strain HI4320) protein is Co-chaperonin GroES.